Consider the following 400-residue polypeptide: Cytoplasmic tRNA 2-thiolation protein 2 (400 aa).

Belongs to the CTU2/NCS2 family.

It localises to the cytoplasm. Its pathway is tRNA modification; 5-methoxycarbonylmethyl-2-thiouridine-tRNA biosynthesis. Its function is as follows. Plays a central role in 2-thiolation of mcm(5)S(2)U at tRNA wobble positions of tRNA(Lys), tRNA(Glu) and tRNA(Gln). May act by forming a heterodimer with NCS6/CTU1 that ligates sulfur from thiocarboxylated URM1 onto the uridine of tRNAs at wobble position. The protein is Cytoplasmic tRNA 2-thiolation protein 2 of Drosophila virilis (Fruit fly).